A 361-amino-acid chain; its full sequence is Chorismate synthase (361 aa).

Residues Arg-48 and Arg-54 each coordinate NADP(+). Residues 125–127, 238–239, Gly-278, 293–297, and Arg-319 each bind FMN; these read RSS, NA, and KPTSS.

Belongs to the chorismate synthase family. Homotetramer. FMNH2 serves as cofactor.

It catalyses the reaction 5-O-(1-carboxyvinyl)-3-phosphoshikimate = chorismate + phosphate. It functions in the pathway metabolic intermediate biosynthesis; chorismate biosynthesis; chorismate from D-erythrose 4-phosphate and phosphoenolpyruvate: step 7/7. In terms of biological role, catalyzes the anti-1,4-elimination of the C-3 phosphate and the C-6 proR hydrogen from 5-enolpyruvylshikimate-3-phosphate (EPSP) to yield chorismate, which is the branch point compound that serves as the starting substrate for the three terminal pathways of aromatic amino acid biosynthesis. This reaction introduces a second double bond into the aromatic ring system. The sequence is that of Chorismate synthase from Yersinia enterocolitica serotype O:8 / biotype 1B (strain NCTC 13174 / 8081).